The primary structure comprises 88 residues: MAGKVTVAFFMFAMIAFLANFGYVECNPAIATGYDPMEICIENCAQCKKMLGAWFEGPLCAESCIKFKGKLIPECEDFASIAPFLNKL.

A signal peptide spans Met1 to Cys26. Intrachain disulfides connect Cys40/Cys64, Cys44/Cys60, and Cys47/Cys75.

This sequence belongs to the insect eclosion hormone family.

Its subcellular location is the secreted. In terms of biological role, neuropeptide that triggers the performance of ecdysis behaviors at the end of a molt. It triggers adult behavior patterns: larval, pupal and adult ecdysis, and plasticization during the molt. This is Eclosion hormone from Manduca sexta (Tobacco hawkmoth).